A 426-amino-acid chain; its full sequence is RuvB-like protein 1 (426 aa).

62–69 lines the ATP pocket; sequence GPVGSGKT.

Belongs to the RuvB family. As to quaternary structure, component of the SWR1 chromatin remodeling complex, the INO80 chromatin remodeling complex, and of the R2TP complex.

Its subcellular location is the nucleus. It carries out the reaction ATP + H2O = ADP + phosphate + H(+). In terms of biological role, DNA helicase which participates in several chromatin remodeling complexes, including the SWR1 and the INO80 complexes. The SWR1 complex mediates the ATP-dependent exchange of histone H2A for the H2A variant HZT1 leading to transcriptional regulation of selected genes by chromatin remodeling. The INO80 complex remodels chromatin by shifting nucleosomes and is involved in DNA repair. Also involved in pre-rRNA processing. The chain is RuvB-like protein 1 (RVB1) from Encephalitozoon cuniculi (strain GB-M1) (Microsporidian parasite).